A 149-amino-acid polypeptide reads, in one-letter code: Cytochrome c' (149 aa).

The N-terminal stretch at M1–A19 is a signal peptide. Heme c contacts are provided by R29, T89, A90, C138, C141, and H142.

In terms of assembly, monomer and homodimer. In terms of processing, binds 1 heme c group covalently per subunit.

In terms of biological role, cytochrome c' is the most widely occurring bacterial c-type cytochrome. Cytochromes c' are high-spin proteins and the heme has no sixth ligand. Their exact function is not known. In Cereibacter sphaeroides (strain ATCC 17023 / DSM 158 / JCM 6121 / CCUG 31486 / LMG 2827 / NBRC 12203 / NCIMB 8253 / ATH 2.4.1.) (Rhodobacter sphaeroides), this protein is Cytochrome c' (cycP).